The sequence spans 394 residues: 1-deoxy-D-xylulose 5-phosphate reductoisomerase (394 aa).

T6, G7, S8, I9, A32, and N124 together coordinate NADPH. Residue K125 participates in 1-deoxy-D-xylulose 5-phosphate binding. E126 is an NADPH binding site. Position 148 (D148) interacts with Mn(2+). 4 residues coordinate 1-deoxy-D-xylulose 5-phosphate: S149, E150, S174, and H197. Mn(2+) is bound at residue E150. Residue G203 participates in NADPH binding. 1-deoxy-D-xylulose 5-phosphate-binding residues include S210, N215, K216, and E219. E219 contacts Mn(2+).

It belongs to the DXR family. It depends on Mg(2+) as a cofactor. Mn(2+) is required as a cofactor.

It carries out the reaction 2-C-methyl-D-erythritol 4-phosphate + NADP(+) = 1-deoxy-D-xylulose 5-phosphate + NADPH + H(+). It functions in the pathway isoprenoid biosynthesis; isopentenyl diphosphate biosynthesis via DXP pathway; isopentenyl diphosphate from 1-deoxy-D-xylulose 5-phosphate: step 1/6. In terms of biological role, catalyzes the NADPH-dependent rearrangement and reduction of 1-deoxy-D-xylulose-5-phosphate (DXP) to 2-C-methyl-D-erythritol 4-phosphate (MEP). The protein is 1-deoxy-D-xylulose 5-phosphate reductoisomerase of Streptomyces avermitilis (strain ATCC 31267 / DSM 46492 / JCM 5070 / NBRC 14893 / NCIMB 12804 / NRRL 8165 / MA-4680).